The chain runs to 512 residues: GMP synthase [glutamine-hydrolyzing] (512 aa).

In terms of domain architecture, Glutamine amidotransferase type-1 spans 3–196 (NILILDFGSQ…VKHICQTSET (194 aa)). Cysteine 80 serves as the catalytic Nucleophile. Catalysis depends on residues histidine 169 and glutamate 171. The GMPS ATP-PPase domain occupies 197 to 387 (WKIETIEKQL…LGLPDVLISR (191 aa)). 225–231 (SGGVDSS) is a binding site for ATP.

As to quaternary structure, homodimer.

It catalyses the reaction XMP + L-glutamine + ATP + H2O = GMP + L-glutamate + AMP + diphosphate + 2 H(+). It participates in purine metabolism; GMP biosynthesis; GMP from XMP (L-Gln route): step 1/1. Catalyzes the synthesis of GMP from XMP. The sequence is that of GMP synthase [glutamine-hydrolyzing] (guaA) from Chlamydia muridarum (strain MoPn / Nigg).